Consider the following 160-residue polypeptide: Lipoprotein signal peptidase (160 aa).

2 helical membrane-spanning segments follow: residues 63–83 (YRLPFFILVSVVALGVIAVTF) and 89–109 (DQHLAAAALALIFSGALGNLI). Residues D119 and D137 contribute to the active site. A helical membrane pass occupies residues 132–152 (AFNVADSAICVGVALLAVDMI).

This sequence belongs to the peptidase A8 family.

The protein localises to the cell inner membrane. It catalyses the reaction Release of signal peptides from bacterial membrane prolipoproteins. Hydrolyzes -Xaa-Yaa-Zaa-|-(S,diacylglyceryl)Cys-, in which Xaa is hydrophobic (preferably Leu), and Yaa (Ala or Ser) and Zaa (Gly or Ala) have small, neutral side chains.. The protein operates within protein modification; lipoprotein biosynthesis (signal peptide cleavage). In terms of biological role, this protein specifically catalyzes the removal of signal peptides from prolipoproteins. The protein is Lipoprotein signal peptidase of Geobacter sulfurreducens (strain ATCC 51573 / DSM 12127 / PCA).